The primary structure comprises 570 residues: Laccase-3 (570 aa).

Positions 1–25 are cleaved as a signal peptide; sequence MESFRRFSLLSFIALLAYFAFLASA. Plastocyanin-like domains lie at 33-149 and 159-310; these read VITP…PRLG and RDIP…YVNA. N-linked (GlcNAc...) asparagine glycosylation occurs at Asn79. Residues His83, His85, His128, and His130 each coordinate Cu cation. Residues Asn188, Asn298, Asn332, Asn383, Asn393, and Asn433 are each glycosylated (N-linked (GlcNAc...) asparagine). A Plastocyanin-like 3 domain is found at 419–554; that stretch reads DFPPVPPVQF…AMVFLVENGR (136 aa). Residues His471, His474, His476, His533, Cys534, His535, and His539 each contribute to the Cu cation site.

It belongs to the multicopper oxidase family. Requires Cu cation as cofactor. As to expression, mostly expressed in roots and siliques.

It is found in the secreted. The protein resides in the extracellular space. The protein localises to the apoplast. It catalyses the reaction 4 hydroquinone + O2 = 4 benzosemiquinone + 2 H2O. Lignin degradation and detoxification of lignin-derived products. The protein is Laccase-3 (LAC3) of Arabidopsis thaliana (Mouse-ear cress).